Reading from the N-terminus, the 737-residue chain is tRNA (guanine(27)-N(2))-dimethyltransferase (737 aa).

The segment covering 1 to 10 (MENMAEEELL) has biased composition (acidic residues). The disordered stretch occupies residues 1–65 (MENMAEEELL…ASAPVPAPAL (65 aa)). A compositionally biased stretch (low complexity) spans 17–49 (VVQVPVPTPTPDSARVPAPAPDSAPVSASTPAP). Residue threonine 24 is modified to Phosphothreonine. Residues 50 to 62 (ASAPTPASAPVPA) show a composition bias toward pro residues. Serine 72 is modified (phosphoserine). The Nucleolar localization signal motif lies at 141-145 (HKLHR). The segment at 190 to 212 (YHCIICSATITRRTDMLGHVRRH) adopts a C2H2-type zinc-finger fold. In terms of domain architecture, Trm1 methyltransferase spans 233–692 (EILKEADTDV…APLMQFKSIL (460 aa)). Residues arginine 266, aspartate 313, aspartate 363, and alanine 364 each contribute to the S-adenosyl-L-methionine site. The Zn(2+) site is built by cysteine 494, cysteine 497, cysteine 519, and cysteine 521. Lysine 589 is covalently cross-linked (Glycyl lysine isopeptide (Lys-Gly) (interchain with G-Cter in SUMO2)). Serine 616 bears the Phosphoserine mark.

It belongs to the class I-like SAM-binding methyltransferase superfamily. Trm1 family.

The protein localises to the nucleus. Its subcellular location is the nucleolus. It catalyses the reaction guanosine(27) in tRNA(Tyr) + 2 S-adenosyl-L-methionine = N(2)-dimethylguanosine(27) in tRNA(Tyr) + 2 S-adenosyl-L-homocysteine + 2 H(+). Its function is as follows. Specifically dimethylates a single guanine residue at position 27 of tRNA(Tyr) using S-adenosyl-L-methionine as donor of the methyl groups. Dimethylation at position 27 of tRNA(Tyr) is required for efficient translation of tyrosine codons. Also required to maintain 3-(3-amino-3-carboxypropyl)uridine (acp3U) in the D-loop of several cytoplasmic tRNAs. This chain is tRNA (guanine(27)-N(2))-dimethyltransferase (TRMT1L), found in Bos taurus (Bovine).